Here is a 205-residue protein sequence, read N- to C-terminus: GTP cyclohydrolase 1 (205 aa).

Cysteine 94, histidine 97, and cysteine 165 together coordinate Zn(2+).

The protein belongs to the GTP cyclohydrolase I family. In terms of assembly, toroid-shaped homodecamer, composed of two pentamers of five dimers.

The enzyme catalyses GTP + H2O = 7,8-dihydroneopterin 3'-triphosphate + formate + H(+). Its pathway is cofactor biosynthesis; 7,8-dihydroneopterin triphosphate biosynthesis; 7,8-dihydroneopterin triphosphate from GTP: step 1/1. This is GTP cyclohydrolase 1 from Sinorhizobium medicae (strain WSM419) (Ensifer medicae).